The chain runs to 376 residues: N-acetyldiaminopimelate deacetylase (376 aa).

The active site involves Asp-69. Residue Glu-128 is the Proton acceptor of the active site.

The protein belongs to the peptidase M20A family. N-acetyldiaminopimelate deacetylase subfamily.

The catalysed reaction is N-acetyl-(2S,6S)-2,6-diaminopimelate + H2O = (2S,6S)-2,6-diaminopimelate + acetate. It participates in amino-acid biosynthesis; L-lysine biosynthesis via DAP pathway; LL-2,6-diaminopimelate from (S)-tetrahydrodipicolinate (acetylase route): step 3/3. Functionally, catalyzes the conversion of N-acetyl-diaminopimelate to diaminopimelate and acetate. The chain is N-acetyldiaminopimelate deacetylase from Streptococcus pneumoniae serotype 4 (strain ATCC BAA-334 / TIGR4).